The primary structure comprises 631 residues: Dolichyl-diphosphooligosaccharide--protein glycosyltransferase subunit 2 (631 aa).

The N-terminal stretch at 1–22 (MALPGSSTVFLLALTIIASTQA) is a signal peptide. Residues 23 to 540 (LTPTHYLTKH…REPEKRPPTV (518 aa)) are Lumenal-facing. The N-linked (GlcNAc...) asparagine glycan is linked to asparagine 106. A Glycyl lysine isopeptide (Lys-Gly) (interchain with G-Cter in ubiquitin) cross-link involves residue lysine 154. A helical membrane pass occupies residues 541 to 561 (VSNTFTALILSPLLLLFALWI). The Cytoplasmic portion of the chain corresponds to 562 to 571 (RIGANVSNFT). Residues 572 to 592 (FAPSTIVFHLGHAAMLGLMYV) form a helical membrane-spanning segment. Over 593 to 596 (YWTQ) the chain is Lumenal. A helical transmembrane segment spans residues 597 to 617 (LNMFQTLKYLAILGSVTFLAG). The Cytoplasmic segment spans residues 618–631 (NRMLAQQAIKRTAH).

Belongs to the SWP1 family. In terms of assembly, component of the oligosaccharyltransferase (OST) complex. OST exists in two different complex forms which contain common core subunits RPN1, RPN2, OST48, OST4, DAD1 and TMEM258, either STT3A or STT3B as catalytic subunits, and form-specific accessory subunits. STT3A complex assembly occurs through the formation of 3 subcomplexes. Subcomplex 1 contains RPN1 and TMEM258, subcomplex 2 contains the STT3A-specific subunits STT3A, DC2/OSTC, and KCP2 as well as the core subunit OST4, and subcomplex 3 contains RPN2, DAD1, and OST48. The STT3A complex can form stable complexes with the Sec61 complex or with both the Sec61 and TRAP complexes. Interacts with DDI2. Interacts with TMEM35A/NACHO.

It is found in the endoplasmic reticulum. The protein localises to the endoplasmic reticulum membrane. It functions in the pathway protein modification; protein glycosylation. Its function is as follows. Subunit of the oligosaccharyl transferase (OST) complex that catalyzes the initial transfer of a defined glycan (Glc(3)Man(9)GlcNAc(2) in eukaryotes) from the lipid carrier dolichol-pyrophosphate to an asparagine residue within an Asn-X-Ser/Thr consensus motif in nascent polypeptide chains, the first step in protein N-glycosylation. N-glycosylation occurs cotranslationally and the complex associates with the Sec61 complex at the channel-forming translocon complex that mediates protein translocation across the endoplasmic reticulum (ER). All subunits are required for a maximal enzyme activity. The polypeptide is Dolichyl-diphosphooligosaccharide--protein glycosyltransferase subunit 2 (Bos taurus (Bovine)).